The following is a 459-amino-acid chain: Bifunctional protein GlmU (459 aa).

The pyrophosphorylase stretch occupies residues Met1–Arg229. UDP-N-acetyl-alpha-D-glucosamine contacts are provided by residues Leu8–Gly11, Lys22, Gln72, and Gly77–Thr78. Mg(2+) is bound at residue Asp102. UDP-N-acetyl-alpha-D-glucosamine-binding residues include Gly139, Glu154, Asn169, and Asn227. Asn227 contributes to the Mg(2+) binding site. Positions Val230 to Asn250 are linker. Positions Gly251–Lys459 are N-acetyltransferase. UDP-N-acetyl-alpha-D-glucosamine is bound by residues Arg332 and Lys350. His362 (proton acceptor) is an active-site residue. Residues Tyr365 and Asn376 each contribute to the UDP-N-acetyl-alpha-D-glucosamine site. Acetyl-CoA is bound by residues Ala379, Asn385–Tyr386, Ser404, Ala422, and Arg439.

In the N-terminal section; belongs to the N-acetylglucosamine-1-phosphate uridyltransferase family. This sequence in the C-terminal section; belongs to the transferase hexapeptide repeat family. Homotrimer. The cofactor is Mg(2+).

Its subcellular location is the cytoplasm. It carries out the reaction alpha-D-glucosamine 1-phosphate + acetyl-CoA = N-acetyl-alpha-D-glucosamine 1-phosphate + CoA + H(+). It catalyses the reaction N-acetyl-alpha-D-glucosamine 1-phosphate + UTP + H(+) = UDP-N-acetyl-alpha-D-glucosamine + diphosphate. The protein operates within nucleotide-sugar biosynthesis; UDP-N-acetyl-alpha-D-glucosamine biosynthesis; N-acetyl-alpha-D-glucosamine 1-phosphate from alpha-D-glucosamine 6-phosphate (route II): step 2/2. Its pathway is nucleotide-sugar biosynthesis; UDP-N-acetyl-alpha-D-glucosamine biosynthesis; UDP-N-acetyl-alpha-D-glucosamine from N-acetyl-alpha-D-glucosamine 1-phosphate: step 1/1. It participates in bacterial outer membrane biogenesis; LPS lipid A biosynthesis. Functionally, catalyzes the last two sequential reactions in the de novo biosynthetic pathway for UDP-N-acetylglucosamine (UDP-GlcNAc). The C-terminal domain catalyzes the transfer of acetyl group from acetyl coenzyme A to glucosamine-1-phosphate (GlcN-1-P) to produce N-acetylglucosamine-1-phosphate (GlcNAc-1-P), which is converted into UDP-GlcNAc by the transfer of uridine 5-monophosphate (from uridine 5-triphosphate), a reaction catalyzed by the N-terminal domain. In Streptococcus gordonii (strain Challis / ATCC 35105 / BCRC 15272 / CH1 / DL1 / V288), this protein is Bifunctional protein GlmU.